Consider the following 1073-residue polypeptide: Semaphorin-6D (1073 aa).

The signal sequence occupies residues 1–20 (MRVFLLCAYILLLMVSQLRA). Residues 21–662 (VSFPEDDEPL…GESNQMVHMN (642 aa)) lie on the Extracellular side of the membrane. The 486-residue stretch at 27–512 (DEPLNTVDYH…FSSCIIRIPL (486 aa)) folds into the Sema domain. Asparagine 51 carries N-linked (GlcNAc...) asparagine glycosylation. 4 disulfide bridges follow: cysteine 108-cysteine 118, cysteine 136-cysteine 145, cysteine 259-cysteine 370, and cysteine 284-cysteine 329. N-linked (GlcNAc...) asparagine glycosylation occurs at asparagine 283. Residues asparagine 435 and asparagine 461 are each glycosylated (N-linked (GlcNAc...) asparagine). Cystine bridges form between cysteine 477–cysteine 506, cysteine 515–cysteine 533, cysteine 521–cysteine 568, and cysteine 525–cysteine 541. The PSI domain maps to 514–569 (RCERYGSCKKSCIASRDPYCGWLSQGSCGRVTPGMLAEGYEQDTEFGNTAHLGDCH). N-linked (GlcNAc...) asparagine glycosylation occurs at asparagine 631. A helical membrane pass occupies residues 663-683 (VLITCVFAAFVLGAFIAGVAV). Topologically, residues 684–1073 (YCYRDMFVRK…SVRPLNKYTY (390 aa)) are cytoplasmic. 3 positions are modified to phosphoserine: serine 723, serine 734, and serine 744. Disordered stretches follow at residues 744-775 (SRKELPPNGDTKSMVMDHRGQPPELAALPTPE), 787-825 (AMKSHSEKAHGHGASRKETPQFFPSSPPPHSPLSHGHIP), 839-874 (TSFSNSNAHKAEKKLQNIDHPLTKSSSKRDHRRSVD), 914-1005 (SMSE…PTPT), and 1021-1073 (LQPS…KYTY). Residue threonine 773 is modified to Phosphothreonine. Over residues 790–805 (SHSEKAHGHGASRKET) the composition is skewed to basic and acidic residues. Residues serine 931, serine 957, and serine 983 each carry the phosphoserine modification. Residues 931 to 942 (SPPSTLPRNSPT) show a composition bias toward polar residues. Composition is skewed to polar residues over residues 980-995 (NLNSPNGVLLSRQPSM) and 1021-1037 (LQPSLSRQSSYTSNGTL).

It belongs to the semaphorin family.

It is found in the cell membrane. Its subcellular location is the cytoplasm. Its function is as follows. Shows growth cone collapsing activity on dorsal root ganglion (DRG) neurons in vitro. May be a stop signal for the DRG neurons in their target areas, and possibly also for other neurons. May also be involved in the maintenance and remodeling of neuronal connections. Ligand of TREM2 with PLXNA1 as coreceptor in dendritic cells, plays a role in the generation of immune responses and skeletal homeostasis. The chain is Semaphorin-6D from Homo sapiens (Human).